The sequence spans 195 residues: Imidazoleglycerol-phosphate dehydratase (195 aa).

Belongs to the imidazoleglycerol-phosphate dehydratase family.

It is found in the cytoplasm. It carries out the reaction D-erythro-1-(imidazol-4-yl)glycerol 3-phosphate = 3-(imidazol-4-yl)-2-oxopropyl phosphate + H2O. The protein operates within amino-acid biosynthesis; L-histidine biosynthesis; L-histidine from 5-phospho-alpha-D-ribose 1-diphosphate: step 6/9. This is Imidazoleglycerol-phosphate dehydratase from Geobacter sp. (strain M21).